The following is an 899-amino-acid chain: Protein translocase subunit SecA (899 aa).

ATP-binding positions include Gln87, 105 to 109, and Asp516; that span reads GEGKT. Residues Cys884, Cys886, Cys895, and His896 each coordinate Zn(2+).

This sequence belongs to the SecA family. Monomer and homodimer. Part of the essential Sec protein translocation apparatus which comprises SecA, SecYEG and auxiliary proteins SecDF. Other proteins may also be involved. It depends on Zn(2+) as a cofactor.

Its subcellular location is the cell inner membrane. It is found in the cytoplasm. It catalyses the reaction ATP + H2O + cellular proteinSide 1 = ADP + phosphate + cellular proteinSide 2.. In terms of biological role, part of the Sec protein translocase complex. Interacts with the SecYEG preprotein conducting channel. Has a central role in coupling the hydrolysis of ATP to the transfer of proteins into and across the cell membrane, serving as an ATP-driven molecular motor driving the stepwise translocation of polypeptide chains across the membrane. In Borrelia garinii subsp. bavariensis (strain ATCC BAA-2496 / DSM 23469 / PBi) (Borreliella bavariensis), this protein is Protein translocase subunit SecA.